The following is a 306-amino-acid chain: Pseudouridine-5'-phosphate glycosidase (306 aa).

Residue Glu-27 is the Proton donor of the active site. Substrate contacts are provided by Lys-88 and Val-108. Mn(2+) is bound at residue Asp-140. 142 to 144 contributes to the substrate binding site; sequence SAD. Lys-161 serves as the catalytic Nucleophile.

This sequence belongs to the pseudouridine-5'-phosphate glycosidase family. As to quaternary structure, homotrimer. Mn(2+) serves as cofactor.

The enzyme catalyses D-ribose 5-phosphate + uracil = psi-UMP + H2O. Functionally, catalyzes the reversible cleavage of pseudouridine 5'-phosphate (PsiMP) to ribose 5-phosphate and uracil. Functions biologically in the cleavage direction, as part of a pseudouridine degradation pathway. The sequence is that of Pseudouridine-5'-phosphate glycosidase from Petrotoga mobilis (strain DSM 10674 / SJ95).